Here is a 540-residue protein sequence, read N- to C-terminus: Phosphoenolpyruvate carboxykinase (ATP) (540 aa).

The substrate site is built by Arg-67, Tyr-207, and Lys-213. ATP is bound by residues Lys-213, His-232, and 248–256; that span reads GLSGTGKTT. Lys-213 and His-232 together coordinate Mn(2+). Residue Asp-269 coordinates Mn(2+). ATP contacts are provided by residues Glu-297, Arg-333, 449–450, and Thr-455; that span reads RI. Arg-333 serves as a coordination point for substrate.

Belongs to the phosphoenolpyruvate carboxykinase (ATP) family. In terms of assembly, monomer. It depends on Mn(2+) as a cofactor.

It is found in the cytoplasm. It carries out the reaction oxaloacetate + ATP = phosphoenolpyruvate + ADP + CO2. It functions in the pathway carbohydrate biosynthesis; gluconeogenesis. Involved in the gluconeogenesis. Catalyzes the conversion of oxaloacetate (OAA) to phosphoenolpyruvate (PEP) through direct phosphoryl transfer between the nucleoside triphosphate and OAA. This is Phosphoenolpyruvate carboxykinase (ATP) from Aliivibrio fischeri (strain MJ11) (Vibrio fischeri).